The primary structure comprises 821 residues: Dapper homolog 1 (821 aa).

Residues Leu-88–Thr-136 adopt a coiled-coil conformation. Disordered stretches follow at residues Ser-288 to His-312, Gln-386 to Asn-432, Asn-564 to Arg-615, and Glu-627 to Lys-655. A compositionally biased stretch (low complexity) spans Ala-388 to Pro-400. Positions Gln-401–Asn-432 are enriched in polar residues. Composition is skewed to basic residues over residues Asp-584–Thr-593, His-601–Arg-615, and Ala-639–His-649. Residues Met-818–Val-821 carry the PDZ-binding motif.

It belongs to the dapper family. Interacts with dvl2.

It localises to the cytoplasm. Its function is as follows. Involved in regulation of intracellular signaling pathways during development. Specifically thought to play a role in canonical and/or non-canonical Wnt signaling pathways through interaction with DSH (Dishevelled) family proteins. Binds to dvl2 and may regulate the degradation of ctnnb1/beta-catenin, thereby modulating the transcriptional activation of target genes of the Wnt signaling pathway. Seems to activate the canonical Wnt signaling pathway. This Danio rerio (Zebrafish) protein is Dapper homolog 1 (dact1).